A 347-amino-acid polypeptide reads, in one-letter code: 4-hydroxy-2-oxovalerate aldolase 2 (347 aa).

The 253-residue stretch at 7-259 (VRITDTSLRD…KTGIDFFDIA (253 aa)) folds into the Pyruvate carboxyltransferase domain. 15-16 (RD) is a substrate binding site. D16 serves as a coordination point for Mn(2+). H19 (proton acceptor) is an active-site residue. Substrate is bound by residues S169 and H198. Positions 198 and 200 each coordinate Mn(2+). Y289 is a binding site for substrate.

The protein belongs to the 4-hydroxy-2-oxovalerate aldolase family.

The catalysed reaction is (S)-4-hydroxy-2-oxopentanoate = acetaldehyde + pyruvate. The polypeptide is 4-hydroxy-2-oxovalerate aldolase 2 (Mycobacterium ulcerans (strain Agy99)).